The chain runs to 379 residues: Alanine racemase (379 aa).

K37 (proton acceptor; specific for D-alanine) is an active-site residue. The residue at position 37 (K37) is an N6-(pyridoxal phosphate)lysine. R139 serves as a coordination point for substrate. The active-site Proton acceptor; specific for L-alanine is Y266. Position 314 (M314) interacts with substrate.

The protein belongs to the alanine racemase family. The cofactor is pyridoxal 5'-phosphate.

It carries out the reaction L-alanine = D-alanine. The protein operates within amino-acid biosynthesis; D-alanine biosynthesis; D-alanine from L-alanine: step 1/1. In terms of biological role, catalyzes the interconversion of L-alanine and D-alanine. May also act on other amino acids. This Sorangium cellulosum (strain So ce56) (Polyangium cellulosum (strain So ce56)) protein is Alanine racemase (alr).